A 210-amino-acid polypeptide reads, in one-letter code: Glutathione S-transferase P (210 aa).

In terms of domain architecture, GST N-terminal spans 2–81 (PPYTVVYFPV…HLGRTLGLYG (80 aa)). Y4 carries the post-translational modification Phosphotyrosine; by EGFR. Residues Y8, R14, W39, K45, and 52 to 53 (QL) contribute to the glutathione site. The residue at position 62 (T62) is a Phosphothreonine. Glutathione is bound at residue 65–66 (QS). Residues 83-204 (DQREAALVDM…ASPEHVNLPI (122 aa)) enclose the GST C-terminal domain. An N6-succinyllysine mark is found at K103 and K116. K128 carries the post-translational modification N6-acetyllysine.

This sequence belongs to the GST superfamily. Pi family. In terms of assembly, homodimer. Interacts with CDK5.

The protein resides in the cytoplasm. The protein localises to the mitochondrion. Its subcellular location is the nucleus. The catalysed reaction is RX + glutathione = an S-substituted glutathione + a halide anion + H(+). It catalyses the reaction prostaglandin J2 + glutathione = prostaglandin J2-S-(R)-glutathione. The enzyme catalyses prostaglandin J2 + glutathione = prostaglandin J2-S-(S)-glutathione. It carries out the reaction prostaglandin A2 + glutathione = prostaglandin A2-S-(S)-glutathione. The catalysed reaction is 11(S)-hydroxy-14(S),15(S)-epoxy-(5Z,8Z,12E)-eicosatrienoate + glutathione = (11S,15S)-dihydroxy-14(R)-S-glutathionyl-(5Z,8Z,12E)-eicosatrienoate. Conjugation of reduced glutathione to a wide number of exogenous and endogenous hydrophobic electrophiles. Involved in the formation of glutathione conjugates of both prostaglandin A2 (PGA2) and prostaglandin J2 (PGJ2). Participates in the formation of novel hepoxilin regioisomers. Negatively regulates CDK5 activity via p25/p35 translocation to prevent neurodegeneration. This Pongo abelii (Sumatran orangutan) protein is Glutathione S-transferase P (GSTP1).